The sequence spans 462 residues: WD repeat-containing protein WRAP73 (462 aa).

4 WD repeats span residues 46-86, 89-129, 176-210, and 221-260; these read TCLD…WHCK, EGSA…VSYI, TDTQ…YSLD, and EWSL…MITE. Residue S281 is modified to Phosphoserine. WD repeat units follow at residues 328–369 and 371–410; these read NPRM…LFVV and EHMS…SVQV.

Interacts with SSX2IP. Ubiquitous.

It is found in the cytoplasm. It localises to the cytoskeleton. Its subcellular location is the microtubule organizing center. The protein localises to the centrosome. Functionally, the SSX2IP:WRAP73 complex is proposed to act as regulator of spindle anchoring at the mitotic centrosome. Required for the centrosomal localization of SSX2IP and normal mitotic bipolar spindle morphology. Required for the targeting of centriole satellite proteins to centrosomes such as of PCM1, SSX2IP, CEP290 and PIBF1/CEP90. Required for ciliogenesis and involved in the removal of the CEP97:CCP110 complex from the mother centriole. Involved in ciliary vesicle formation at the mother centriole and required for the docking of vesicles to the basal body during ciliogenesis; may promote docking of RAB8A- and ARL13B-containing vesicles. The chain is WD repeat-containing protein WRAP73 (Wrap73) from Mus musculus (Mouse).